Reading from the N-terminus, the 190-residue chain is Elongation factor P (190 aa).

It belongs to the elongation factor P family.

It localises to the cytoplasm. Its pathway is protein biosynthesis; polypeptide chain elongation. Functionally, involved in peptide bond synthesis. Stimulates efficient translation and peptide-bond synthesis on native or reconstituted 70S ribosomes in vitro. Probably functions indirectly by altering the affinity of the ribosome for aminoacyl-tRNA, thus increasing their reactivity as acceptors for peptidyl transferase. This chain is Elongation factor P, found in Sulfurihydrogenibium sp. (strain YO3AOP1).